The primary structure comprises 488 residues: 3-octaprenyl-4-hydroxybenzoate carboxy-lyase (488 aa).

Residue Asn-172 participates in Mn(2+) binding. Residues 175 to 177, 189 to 191, and 194 to 195 contribute to the prenylated FMN site; these read IYR, RWL, and RG. A Mn(2+)-binding site is contributed by Glu-238. Residue Asp-287 is the Proton donor of the active site.

This sequence belongs to the UbiD family. In terms of assembly, homohexamer. Requires prenylated FMN as cofactor. The cofactor is Mn(2+).

Its subcellular location is the cell membrane. The enzyme catalyses a 4-hydroxy-3-(all-trans-polyprenyl)benzoate + H(+) = a 2-(all-trans-polyprenyl)phenol + CO2. Its pathway is cofactor biosynthesis; ubiquinone biosynthesis. Catalyzes the decarboxylation of 3-octaprenyl-4-hydroxy benzoate to 2-octaprenylphenol, an intermediate step in ubiquinone biosynthesis. The chain is 3-octaprenyl-4-hydroxybenzoate carboxy-lyase from Legionella pneumophila (strain Lens).